Consider the following 153-residue polypeptide: Histone H2B.3 (153 aa).

Basic and acidic residues-rich tracts occupy residues 1 to 28 (MAPK…EKAL) and 36 to 53 (EKRL…EGRK). Residues 1-61 (MAPKAEKKPA…RKAGRKKAKK (61 aa)) form a disordered region. 2 positions are modified to N6-acetyllysine: K7 and K37. K149 is covalently cross-linked (Glycyl lysine isopeptide (Lys-Gly) (interchain with G-Cter in ubiquitin)).

It belongs to the histone H2B family. In terms of assembly, the nucleosome is a histone octamer containing two molecules each of H2A, H2B, H3 and H4 assembled in one H3-H4 heterotetramer and two H2A-H2B heterodimers. The octamer wraps approximately 147 bp of DNA. Can be acetylated to form H2BK6ac and H2BK33ac. Post-translationally, monoubiquitinated by BRE1 to form H2BK143ub1 and deubiquitinated by UBP26. Required for heterochromatic histone H3 di- and trimethylation at H3K4me. May give a specific tag for epigenetic transcriptional activation.

Its subcellular location is the nucleus. It localises to the chromosome. Functionally, core component of nucleosome. Nucleosomes wrap and compact DNA into chromatin, limiting DNA accessibility to the cellular machineries which require DNA as a template. Histones thereby play a central role in transcription regulation, DNA repair, DNA replication and chromosomal stability. DNA accessibility is regulated via a complex set of post-translational modifications of histones, also called histone code, and nucleosome remodeling. The chain is Histone H2B.3 (H2B.3) from Oryza sativa subsp. indica (Rice).